The sequence spans 153 residues: UPF0311 protein RPA1785 (153 aa).

It belongs to the UPF0311 family.

This is UPF0311 protein RPA1785 from Rhodopseudomonas palustris (strain ATCC BAA-98 / CGA009).